Consider the following 208-residue polypeptide: Protein-L-isoaspartate O-methyltransferase (208 aa).

Ser59 is an active-site residue.

It belongs to the methyltransferase superfamily. L-isoaspartyl/D-aspartyl protein methyltransferase family.

It localises to the cytoplasm. It carries out the reaction [protein]-L-isoaspartate + S-adenosyl-L-methionine = [protein]-L-isoaspartate alpha-methyl ester + S-adenosyl-L-homocysteine. Its function is as follows. Catalyzes the methyl esterification of L-isoaspartyl residues in peptides and proteins that result from spontaneous decomposition of normal L-aspartyl and L-asparaginyl residues. It plays a role in the repair and/or degradation of damaged proteins. This is Protein-L-isoaspartate O-methyltransferase from Salmonella paratyphi A (strain ATCC 9150 / SARB42).